Reading from the N-terminus, the 320-residue chain is dTDP-glucose 4,6-dehydratase (320 aa).

Residues 11–12, 38–41, 64–65, 84–88, and S103 each bind NAD(+); these read FI, DKLG, DI, and FAAET. Residue T88 participates in substrate binding. T128 contacts substrate. Residue D129 is the Proton donor of the active site. Catalysis depends on proton acceptor residues E130 and Y152. 152 to 156 lines the NAD(+) pocket; sequence YAASK. N181 is a binding site for substrate. Position 182 (N182) interacts with NAD(+). Substrate is bound by residues 191 to 192, 207 to 209, R216, N251, and 274 to 278; these read KM, PVY, and DRKGH.

It belongs to the NAD(P)-dependent epimerase/dehydratase family. dTDP-glucose dehydratase subfamily. Homodimer. NAD(+) serves as cofactor.

The catalysed reaction is dTDP-alpha-D-glucose = dTDP-4-dehydro-6-deoxy-alpha-D-glucose + H2O. Functionally, probably involved in the biosynthesis of the acarviose moiety of the alpha-glucosidase inhibitor acarbose. Catalyzes the dehydration of dTDP-D-glucose to form dTDP-6-deoxy-D-xylo-4-hexulose via a three-step process involving oxidation, dehydration and reduction. This Actinoplanes sp. (strain ATCC 31044 / CBS 674.73 / SE50/110) protein is dTDP-glucose 4,6-dehydratase.